We begin with the raw amino-acid sequence, 60 residues long: Conotoxin Cal6.20 (60 aa).

The N-terminal stretch at 1 to 22 is a signal peptide; the sequence is MKLTCVLIVAVLILTACQVIAA. 3 disulfide bridges follow: Cys-32–Cys-42, Cys-35–Cys-48, and Cys-41–Cys-55.

Belongs to the conotoxin O1 superfamily. As to expression, expressed by the venom duct.

It localises to the secreted. Its function is as follows. Probable neurotoxin. The chain is Conotoxin Cal6.20 from Californiconus californicus (California cone).